We begin with the raw amino-acid sequence, 113 residues long: Flagellar hook-basal body complex protein FliE (113 aa).

Belongs to the FliE family.

The protein resides in the bacterial flagellum basal body. The polypeptide is Flagellar hook-basal body complex protein FliE (Rhizobium etli (strain CIAT 652)).